A 609-amino-acid chain; its full sequence is Glutamine--fructose-6-phosphate aminotransferase [isomerizing] (609 aa).

Cys2 functions as the Nucleophile; for GATase activity in the catalytic mechanism. Residues 2–217 (CGIVGAIAGR…EGDTAELRRD (216 aa)) enclose the Glutamine amidotransferase type-2 domain. SIS domains are found at residues 284 to 425 (TADA…LQGR) and 458 to 599 (WAER…VDKP). The active-site For Fru-6P isomerization activity is the Lys604.

In terms of assembly, homodimer.

Its subcellular location is the cytoplasm. The enzyme catalyses D-fructose 6-phosphate + L-glutamine = D-glucosamine 6-phosphate + L-glutamate. Its function is as follows. Catalyzes the first step in hexosamine metabolism, converting fructose-6P into glucosamine-6P using glutamine as a nitrogen source. The sequence is that of Glutamine--fructose-6-phosphate aminotransferase [isomerizing] from Xanthomonas campestris pv. campestris (strain ATCC 33913 / DSM 3586 / NCPPB 528 / LMG 568 / P 25).